Here is a 136-residue protein sequence, read N- to C-terminus: Protein PsiE (136 aa).

Helical transmembrane passes span 15–35 (ILQTVLNLGLLCLGLILVVFL), 55–75 (YELVEGLVVYFLYFEFIALIV), 82–102 (FHFPLRYFVYIGITAIVRLII), and 108–128 (PLDVLIYSAAILLLVITLWLC).

The protein belongs to the PsiE family.

It localises to the cell inner membrane. The protein is Protein PsiE of Escherichia coli (strain SE11).